The primary structure comprises 472 residues: Coronin-6 (472 aa).

6 WD repeats span residues 23 to 64, 72 to 111, 122 to 161, 165 to 204, 210 to 251, and 256 to 296; these read QAYE…VLPL, KNYP…VWQI, EPII…IWNV, EVLL…IIDP, VAEQ…LWDP, and EPVA…YFEI. A disordered region spans residues 407 to 433; the sequence is KRNILDVRPPSGPRRSQSASDAPLSQQ. Over residues 420 to 433 the composition is skewed to polar residues; sequence RRSQSASDAPLSQQ. Positions 430–464 form a coiled coil; that stretch reads LSQQHTLETLLEEIKALRERVQAQEQRITALENML.

The polypeptide is Coronin-6 (CORO6) (Homo sapiens (Human)).